The sequence spans 216 residues: Homeobox-leucine zipper protein ATHB-40 (216 aa).

Residues 28–52 (GEVKQPKRRRKKTKGSVASADGGNG) form a disordered region. A DNA-binding region (homeobox) is located at residues 52–111 (GLFRKRKLTDEQVNMLEMSFGDEHKLESERKDRLAAELGLDPRQVAVWFQNRRARWKNKR). Positions 112–140 (LEEEYNKLKNSHDNVVVDKCRLESEVIQL) are leucine-zipper.

This sequence belongs to the HD-ZIP homeobox family. Class I subfamily. Expressed in roots, flowers and siliques.

The protein resides in the nucleus. Functionally, probable transcription factor. The protein is Homeobox-leucine zipper protein ATHB-40 (ATHB-40) of Arabidopsis thaliana (Mouse-ear cress).